The primary structure comprises 147 residues: MVHLTPDEKNAVCALWGKVNVEEVGGEALGRLLVVYPWTQRFFDSFGDLSSPSAVMGNPKVKAHGKKVLSAFSEGLNHLDNLKGTFAKLSELHCDKLHVDPENFRLLGNVLVVVLAHHFGKDFTPEVQAAYQKVVAGVATALAHKYH.

The 145-residue stretch at 3-147 (HLTPDEKNAV…VATALAHKYH (145 aa)) folds into the Globin domain. S51 bears the Phosphoserine mark. Heme b-binding residues include H64 and H93.

Belongs to the globin family. As to quaternary structure, heterotetramer of two delta chains and two alpha chains. In terms of tissue distribution, red blood cells.

The chain is Hemoglobin subunit delta (HBD) from Otolemur crassicaudatus (Brown greater galago).